A 483-amino-acid polypeptide reads, in one-letter code: MTKMDIRGAVDAAVPTNIIAAKAAEVRANKVNWQSYLQGQMISSEDCEFIQRFEMKRSPEEKQEMLQTEGSQCAKTFINLMTHISKEQTVQYILTLVDDTLQENHQRVSIFFDYAKRSKNTAWSYFLPMLNRQDLFTVHMAARIIAKLAAWGKELMEGSDLNYYFNWIKTQLSSQKLRGSGVTAETGTVSSSDSSQYVQCVAGCLQLMLRVNEYRFAWVEADGVNCIMGVLSNKCGFQLQYQMIFSVWLLAFSPQMCEHLRRYNIIPVLSDILQESVKEKVTRIILAAFRNFLEKSVERETRQEYALAMIQCKVLKQLENLEQQKYDDEDISEDIKFLLEKLGESVQDLSSFDEYSSELKSGRLEWSPVHKSEKFWRENAARLNEKNYELLKILTKLLEVSDDPQVLAVAAHDVGEYVRHYPRGKRVIEQLGGKQLVMNHMHHEDQQVRYNALLAVQKLMVHNWEYLGKQLQSEQPQTAAARS.

Ser483 carries the post-translational modification Phosphoserine.

It belongs to the V-ATPase H subunit family. V-ATPase is a heteromultimeric enzyme made up of two complexes: the ATP-hydrolytic V1 complex and the proton translocation V0 complex. The V1 complex consists of three catalytic AB heterodimers that form a heterohexamer, three peripheral stalks each consisting of EG heterodimers, one central rotor including subunits D and F, and the regulatory subunits C and H. The proton translocation complex V0 consists of the proton transport subunit a, a ring of proteolipid subunits c9c'', rotary subunit d, subunits e and f, and the accessory subunits ATP6AP1/Ac45 and ATP6AP2/PRR. Interacts with AP2M1. Expressed in brain (at protein level).

The protein localises to the cytoplasmic vesicle. The protein resides in the clathrin-coated vesicle membrane. In terms of biological role, subunit of the V1 complex of vacuolar(H+)-ATPase (V-ATPase), a multisubunit enzyme composed of a peripheral complex (V1) that hydrolyzes ATP and a membrane integral complex (V0) that translocates protons. V-ATPase is responsible for acidifying and maintaining the pH of intracellular compartments and in some cell types, is targeted to the plasma membrane, where it is responsible for acidifying the extracellular environment. Subunit H is essential for V-ATPase activity, but not for the assembly of the complex. Involved in the endocytosis mediated by clathrin-coated pits, required for the formation of endosomes. The chain is V-type proton ATPase subunit H (ATP6V1H) from Bos taurus (Bovine).